Reading from the N-terminus, the 33-residue chain is Brevinin-2E (33 aa).

A disulfide bridge links C27 with C33.

The protein belongs to the frog skin active peptide (FSAP) family. Brevinin subfamily. Expressed by the skin glands.

It localises to the secreted. In terms of biological role, shows antibacterial activity against representative Gram-negative and Gram-positive bacterial species, and hemolytic activity. The protein is Brevinin-2E of Pelophylax lessonae (Pool frog).